The following is a 452-amino-acid chain: Nuclear distribution protein PAC1 (452 aa).

One can recognise a LisH domain in the interval 12–44; sequence QKDELHKAILAYFSASGLSNTGAALREELGVGD. Residues 64–91 are a coiled coil; it reads TGVLRLQKKIMELESRLSSLQSELDSAT. WD repeat units follow at residues 117-158, 160-200, 204-245, 248-287, 290-350, 352-391, 396-435, and 437-452; these read SHRN…RTVK, HTKA…KNIR, GHDH…CVKT, GHSD…HKAT, GHEH…LKTL, GHDN…RCVK, AHSH…INVR, and VIAT…VFAS.

It belongs to the WD repeat LIS1/nudF family. Self-associates. Interacts with NDL1 and dynein.

Its subcellular location is the cytoplasm. The protein resides in the cytoskeleton. It localises to the spindle pole. Functionally, positively regulates the activity of the minus-end directed microtubule motor protein dynein. May enhance dynein-mediated microtubule sliding by targeting dynein to the microtubule plus end. Required for nuclear migration during vegetative growth as well as development. Required for retrograde early endosome (EE) transport from the hyphal tip. Required for localization of dynein to the mitotic spindle poles. Recruits additional proteins to the dynein complex at SPBs. The sequence is that of Nuclear distribution protein PAC1 from Tuber melanosporum (strain Mel28) (Perigord black truffle).